We begin with the raw amino-acid sequence, 399 residues long: UDP-N-acetylglucosamine--N-acetylmuramyl-(pentapeptide) pyrophosphoryl-undecaprenol N-acetylglucosamine transferase (399 aa).

Residues 29–31 (TAG), Asn148, Arg185, Ser219, and Gln318 contribute to the UDP-N-acetyl-alpha-D-glucosamine site.

It belongs to the glycosyltransferase 28 family. MurG subfamily.

It is found in the cell membrane. It carries out the reaction di-trans,octa-cis-undecaprenyl diphospho-N-acetyl-alpha-D-muramoyl-L-alanyl-D-glutamyl-meso-2,6-diaminopimeloyl-D-alanyl-D-alanine + UDP-N-acetyl-alpha-D-glucosamine = di-trans,octa-cis-undecaprenyl diphospho-[N-acetyl-alpha-D-glucosaminyl-(1-&gt;4)]-N-acetyl-alpha-D-muramoyl-L-alanyl-D-glutamyl-meso-2,6-diaminopimeloyl-D-alanyl-D-alanine + UDP + H(+). It functions in the pathway cell wall biogenesis; peptidoglycan biosynthesis. Functionally, cell wall formation. Catalyzes the transfer of a GlcNAc subunit on undecaprenyl-pyrophosphoryl-MurNAc-pentapeptide (lipid intermediate I) to form undecaprenyl-pyrophosphoryl-MurNAc-(pentapeptide)GlcNAc (lipid intermediate II). This is UDP-N-acetylglucosamine--N-acetylmuramyl-(pentapeptide) pyrophosphoryl-undecaprenol N-acetylglucosamine transferase from Mycobacterium ulcerans (strain Agy99).